The primary structure comprises 430 residues: Enolase (430 aa).

Residue Gln-163 participates in (2R)-2-phosphoglycerate binding. Glu-205 acts as the Proton donor in catalysis. Mg(2+) contacts are provided by Asp-242, Glu-287, and Asp-314. (2R)-2-phosphoglycerate-binding residues include Lys-339, Arg-368, Ser-369, and Lys-390. The Proton acceptor role is filled by Lys-339.

This sequence belongs to the enolase family. It depends on Mg(2+) as a cofactor.

The protein resides in the cytoplasm. Its subcellular location is the secreted. The protein localises to the cell surface. It catalyses the reaction (2R)-2-phosphoglycerate = phosphoenolpyruvate + H2O. Its pathway is carbohydrate degradation; glycolysis; pyruvate from D-glyceraldehyde 3-phosphate: step 4/5. Catalyzes the reversible conversion of 2-phosphoglycerate (2-PG) into phosphoenolpyruvate (PEP). It is essential for the degradation of carbohydrates via glycolysis. The chain is Enolase from Bacillus cytotoxicus (strain DSM 22905 / CIP 110041 / 391-98 / NVH 391-98).